The chain runs to 564 residues: Sulfite reductase [NADPH] hemoprotein beta-component 2 (564 aa).

Cys-426, Cys-432, Cys-471, and Cys-475 together coordinate [4Fe-4S] cluster. Cys-475 serves as a coordination point for siroheme.

The protein belongs to the nitrite and sulfite reductase 4Fe-4S domain family. In terms of assembly, alpha(8)-beta(8). The alpha component is a flavoprotein, the beta component is a hemoprotein. The cofactor is siroheme. [4Fe-4S] cluster serves as cofactor.

It catalyses the reaction hydrogen sulfide + 3 NADP(+) + 3 H2O = sulfite + 3 NADPH + 4 H(+). It functions in the pathway sulfur metabolism; hydrogen sulfide biosynthesis; hydrogen sulfide from sulfite (NADPH route): step 1/1. Component of the sulfite reductase complex that catalyzes the 6-electron reduction of sulfite to sulfide. This is one of several activities required for the biosynthesis of L-cysteine from sulfate. The chain is Sulfite reductase [NADPH] hemoprotein beta-component 2 from Klebsiella pneumoniae (strain 342).